Reading from the N-terminus, the 740-residue chain is NAD(P)H-quinone oxidoreductase subunit 5, chloroplastic (740 aa).

16 helical membrane-spanning segments follow: residues 9–29 (WIIPFIPLPVPMLIGAGLILF), 40–60 (WAFQSVLLLSIVMVFSIYLSI), 89–109 (IDPLTSIMSILITTVGIMVLI), 125–145 (FAYMSFFSTSMLGLVTSSNLI), 147–167 (IYIFWELVGLCSYLLIGFWFT), 185–205 (GDFGLLLGILGFYWITGSFEF), 219–239 (NEVDFLFVTLCAVLLFAGAVA), 258–278 (TPISALIHAATMVAAGIFLVA), 286–306 (VIPYIMYLISVIGIITVLLGA), 327–347 (LGYMMLALGMGSYRSALFHLI), 354–374 (ALLFLGSGSIIHSMETIVGYS), 396–416 (ITFLLGTLSLCGIPPLACFWS), 425–445 (WLYSPIFAIIAWATAGLTAFY), 543–563 (LFPIFVLGLFTLFVGSLGIPF), 602–622 (VLSVSIAYFGIFIASFLYKPI), and 717–737 (SYLFLYLAYVLVFLLVYYLLF).

This sequence belongs to the complex I subunit 5 family. In terms of assembly, NDH is composed of at least 16 different subunits, 5 of which are encoded in the nucleus.

The protein resides in the plastid. It localises to the chloroplast thylakoid membrane. It catalyses the reaction a plastoquinone + NADH + (n+1) H(+)(in) = a plastoquinol + NAD(+) + n H(+)(out). The enzyme catalyses a plastoquinone + NADPH + (n+1) H(+)(in) = a plastoquinol + NADP(+) + n H(+)(out). Functionally, NDH shuttles electrons from NAD(P)H:plastoquinone, via FMN and iron-sulfur (Fe-S) centers, to quinones in the photosynthetic chain and possibly in a chloroplast respiratory chain. The immediate electron acceptor for the enzyme in this species is believed to be plastoquinone. Couples the redox reaction to proton translocation, and thus conserves the redox energy in a proton gradient. This Nicotiana tomentosiformis (Tobacco) protein is NAD(P)H-quinone oxidoreductase subunit 5, chloroplastic (ndhF).